The sequence spans 125 residues: Fluoride-specific ion channel FluC (125 aa).

Helical transmembrane passes span 5–25 (ILAI…LALW), 37–57 (LAAN…FHLL), 71–91 (GFLG…TMLL), and 97–117 (VALL…WLGI). Na(+) contacts are provided by Gly74 and Thr77.

The protein belongs to the fluoride channel Fluc/FEX (TC 1.A.43) family.

It is found in the cell inner membrane. The catalysed reaction is fluoride(in) = fluoride(out). Na(+) is not transported, but it plays an essential structural role and its presence is essential for fluoride channel function. In terms of biological role, fluoride-specific ion channel. Important for reducing fluoride concentration in the cell, thus reducing its toxicity. The sequence is that of Fluoride-specific ion channel FluC from Variovorax paradoxus (strain S110).